The primary structure comprises 412 residues: Multidrug resistance protein MdtG (412 aa).

10 helical membrane passes run 20–40, 62–82, 96–116, 119–139, 150–170, 177–197, 225–245, 260–280, 294–314, and 382–402; these read LFVA…IMPF, LVFS…GGLA, LGMS…QFLI, ALLG…ATQI, TLST…GLLA, PVFF…LYFI, VLCL…IAPI, LAFI…MSAP, ILVA…LVQT, and TVFF…YWCL.

This sequence belongs to the major facilitator superfamily. DHA1 family. MdtG (TC 2.A.1.2.20) subfamily.

The protein resides in the cell inner membrane. This Rahnella sp. (strain Y9602) protein is Multidrug resistance protein MdtG.